Reading from the N-terminus, the 458-residue chain is Cysteine--tRNA ligase (458 aa).

Cys29 contributes to the Zn(2+) binding site. The 'HIGH' region signature appears at 31–41 (MTVYDLCHLGH). Zn(2+) is bound by residues Cys213, His238, and Glu242. The 'KMSKS' region signature appears at 270 to 274 (KMSKS). Lys273 serves as a coordination point for ATP.

It belongs to the class-I aminoacyl-tRNA synthetase family. As to quaternary structure, monomer. The cofactor is Zn(2+).

The protein resides in the cytoplasm. The enzyme catalyses tRNA(Cys) + L-cysteine + ATP = L-cysteinyl-tRNA(Cys) + AMP + diphosphate. This chain is Cysteine--tRNA ligase, found in Acidovorax ebreus (strain TPSY) (Diaphorobacter sp. (strain TPSY)).